The following is a 600-amino-acid chain: Aspartate--tRNA ligase (600 aa).

Glutamate 175 is an L-aspartate binding site. Residues 199 to 202 are aspartate; sequence QLFK. Arginine 221 contacts L-aspartate. ATP is bound by residues 221–223 and glutamine 230; that span reads RDE. Position 448 (histidine 448) interacts with L-aspartate. Glutamate 484 is an ATP binding site. Position 491 (arginine 491) interacts with L-aspartate. 536–539 serves as a coordination point for ATP; sequence GLDR.

This sequence belongs to the class-II aminoacyl-tRNA synthetase family. Type 1 subfamily. Homodimer.

It is found in the cytoplasm. It carries out the reaction tRNA(Asp) + L-aspartate + ATP = L-aspartyl-tRNA(Asp) + AMP + diphosphate. Its function is as follows. Catalyzes the attachment of L-aspartate to tRNA(Asp) in a two-step reaction: L-aspartate is first activated by ATP to form Asp-AMP and then transferred to the acceptor end of tRNA(Asp). This Limosilactobacillus reuteri (strain DSM 20016) (Lactobacillus reuteri) protein is Aspartate--tRNA ligase.